Reading from the N-terminus, the 629-residue chain is Coiled-coil domain-containing protein 93 (629 aa).

Positions 1 to 23 (MGLPKGPEGQGLPEVETREDEEQ) are disordered. The segment at 1 to 428 (MGLPKGPEGQ…ETLKAERAPG (428 aa)) is sufficient for interaction with CCDC22. 2 coiled-coil regions span residues 231–430 (LSAA…PGEK) and 558–599 (LRQM…LLEK). Residues S298, S301, and S305 each carry the phosphoserine modification. The sufficient for interaction with WASHC2C stretch occupies residues 446–629 (THNEDLDRRY…LLSKIKAKAS (184 aa)).

It belongs to the CCDC93 family. In terms of assembly, component of the commander complex consisting of the CCC subcomplex and the retriever subcomplex. Component of the CCC (COMMD/CCDC22/CCDC93) subcomplex consisting of COMMD1, COMMD2, COMMD3, COMMD4, COMMD5, COMMD6, COMMD7, COMMD8, COMMD9, COMMD10, CCDC22 and CCDC93. Forms a coiled-coil heterodimer with CCDC22; this heterodimer interacts with the guanine nucleotide exchange factor DENND10; the interaction is direct. Interacts with WASHC1. Interacts directly with WASHC2C. Interacts with SNX17 and SNX31.

Its subcellular location is the early endosome. In terms of biological role, component of the commander complex that is essential for endosomal recycling of transmembrane cargos; the commander complex is composed of composed of the CCC subcomplex and the retriever subcomplex. Component of the CCC complex, which is involved in the regulation of endosomal recycling of surface proteins, including integrins, signaling receptor and channels. The CCC complex associates with SNX17, retriever and WASH complexes to prevent lysosomal degradation and promote cell surface recycling of numerous cargos such as integrins ITGA5:ITGB1. Involved in copper-dependent ATP7A trafficking between the trans-Golgi network and vesicles in the cell periphery; the function is proposed to depend on its association within the CCC complex and cooperation with the WASH complex on early endosomes and is dependent on its interaction with WASHC2C. This is Coiled-coil domain-containing protein 93 (Ccdc93) from Mus musculus (Mouse).